Reading from the N-terminus, the 447-residue chain is GTPase Der (447 aa).

EngA-type G domains follow at residues 4–165 (QIIT…PEEE) and 180–357 (LQIV…KIWN). Residues 10-17 (GRPNVGKS), 57-61 (DTPGL), 119-122 (NKCE), 186-193 (GRPNAGKS), 233-237 (DTAGL), and 298-301 (NKWD) contribute to the GTP site. One can recognise a KH-like domain in the interval 358–443 (KKITTSKLNE…PIRFTYVKTK (86 aa)).

It belongs to the TRAFAC class TrmE-Era-EngA-EngB-Septin-like GTPase superfamily. EngA (Der) GTPase family. In terms of assembly, associates with the 50S ribosomal subunit.

In terms of biological role, GTPase that plays an essential role in the late steps of ribosome biogenesis. The protein is GTPase Der of Rickettsia rickettsii (strain Iowa).